Consider the following 110-residue polypeptide: uncharacterized protein (110 aa).

Over residues 1 to 20 the composition is skewed to polar residues; sequence MNQQNQKISNPQTPVPTTSE. A disordered region spans residues 1–24; it reads MNQQNQKISNPQTPVPTTSEMNDR.

This is an uncharacterized protein from Bacillus subtilis (strain 168).